Consider the following 196-residue polypeptide: Alpha-crystallin A chain (196 aa).

Position 1 is an N-acetylmethionine (M1). The tract at residues 1-63 (MDVTIQHPWF…RTVLDSGISE (63 aa)) is required for complex formation with BFSP1 and BFSP2. Q6 carries the post-translational modification Deamidated glutamine; partial. Position 45 is a phosphoserine (S45). At Q50 the chain carries Deamidated glutamine; partial. Residues 76–185 (HAGNPKNNPV…GHSERAIPVS (110 aa)) form the sHSP domain. K93 and K122 each carry N6-acetyllysine. H123 is a binding site for Zn(2+). Position 124 is a deamidated asparagine; partial (N124). Residues E125 and H130 each contribute to the Zn(2+) site. S145 is subject to Phosphoserine. The residue at position 146 (N146) is a Deamidated asparagine; partial. The disordered stretch occupies residues 168–196 (KVQSGLDAGHSERAIPVSREEKPSSAPSS). At Q170 the chain carries Deamidated glutamine; partial. Residues 176–190 (GHSERAIPVSREEKP) show a composition bias toward basic and acidic residues. H177 contacts Zn(2+). An O-linked (GlcNAc) serine glycan is attached at S185.

The protein belongs to the small heat shock protein (HSP20) family. In terms of assembly, heteropolymer composed of three CRYAA and one CRYAB subunits. Inter-subunit bridging via zinc ions enhances stability, which is crucial as there is no protein turn over in the lens. Can also form homodimers and homotetramers (dimers of dimers) which serve as the building blocks of homooligomers. Within homooligomers, the zinc-binding motif is created from residues of 3 different molecules. His-123 and Glu-125 from one molecule are ligands of the zinc ion, and His-130 and His-177 residues from additional molecules complete the site with tetrahedral coordination geometry. Part of a complex required for lens intermediate filament formation composed of BFSP1, BFSP2 and CRYAA. Post-translationally, acetylation at Lys-93 may increase chaperone activity. Undergoes age-dependent proteolytical cleavage at the C-terminus.

The protein localises to the cytoplasm. Its subcellular location is the nucleus. In terms of biological role, contributes to the transparency and refractive index of the lens. Acts as a chaperone, preventing aggregation of various proteins under a wide range of stress conditions. Required for the correct formation of lens intermediate filaments as part of a complex composed of BFSP1, BFSP2 and CRYAA. The sequence is that of Alpha-crystallin A chain (Cryaa) from Mus musculus (Mouse).